The sequence spans 218 residues: MSHGDTIRVDASVRAKCGTGSARALRAAGLIPAVVYGKNRDAVNISLSHADFLKKCRTLPIFSQLIKLCIDGKEEFALTKEIQKHPVSGAVSHVDFQFVDRGAEIKVEVPLVFLNEQKCAGVKLGGALNILHRSLLIRCAPDAIPQSLEVDLLDLAIGHSIHVSDLALPETMQVAMKEENPVIASVSATAAVEEAKEDGAPEESAQGQGAAEAQETNK.

The tract at residues 187 to 218 is disordered; the sequence is SATAAVEEAKEDGAPEESAQGQGAAEAQETNK. Residues 202–218 are compositionally biased toward low complexity; that stretch reads EESAQGQGAAEAQETNK.

Belongs to the bacterial ribosomal protein bL25 family. CTC subfamily. Part of the 50S ribosomal subunit; part of the 5S rRNA/L5/L18/L25 subcomplex. Contacts the 5S rRNA. Binds to the 5S rRNA independently of L5 and L18.

In terms of biological role, this is one of the proteins that binds to the 5S RNA in the ribosome where it forms part of the central protuberance. This is Large ribosomal subunit protein bL25 from Anaplasma marginale (strain St. Maries).